The following is a 437-amino-acid chain: Epsilon-sarcoglycan (437 aa).

Residues 1-317 (MQLPWWWELG…LKSRDYYTDF (317 aa)) lie on the Extracellular side of the membrane. Asn-200 carries an N-linked (GlcNAc...) asparagine glycan. The chain crosses the membrane as a helical span at residues 318–338 (LVTLAVPSAVALVLFLILAYI). The Cytoplasmic segment spans residues 339 to 437 (MCCRREGVEK…QQQTTGKWYS (99 aa)). A disordered region spans residues 418–437 (QNLPHQTQIPQQQTTGKWYS).

The protein belongs to the sarcoglycan alpha/epsilon family. In terms of processing, N-glycosylated. Post-translationally, ubiquitinated, leading to its degradation by the proteasome.

The protein localises to the cell membrane. The protein resides in the sarcolemma. It is found in the cytoplasm. Its subcellular location is the cytoskeleton. It localises to the cell projection. The protein localises to the dendrite. The protein resides in the golgi apparatus. In terms of biological role, component of the sarcoglycan complex, a subcomplex of the dystrophin-glycoprotein complex which forms a link between the F-actin cytoskeleton and the extracellular matrix. The chain is Epsilon-sarcoglycan (SGCE) from Bos taurus (Bovine).